Consider the following 1262-residue polypeptide: Unconventional myosin-VI (1262 aa).

The 52-residue stretch at 2–53 (EDGKPVWAPHPTDGFQMGNIVDIGPDSLTIEPLNQKGKTFLALINQVFPAEE) folds into the Myosin N-terminal SH3-like domain. The 715-residue stretch at 57 to 771 (KDVEDNCSLM…KFAEFDQIMK (715 aa)) folds into the Myosin motor domain. 151 to 158 (GESGAGKT) is a binding site for ATP. The residue at position 267 (Ser267) is a Phosphoserine. The tract at residues 273–317 (YLNRGCTRFFANKETDKQILQNRKSPEYVKAGSLKDPLLDDHGDF) is responsible for slow ATPase activity. Phosphothreonine is present on Thr405. The residue at position 604 (Ser604) is a Phosphoserine. Actin-binding regions lie at residues 651-673 (LNLL…KPNL) and 665-672 (FIRCIKPN). The required for binding calmodulin stretch occupies residues 782 to 810 (KRVNLWLVCSRWKKVQWCSLSVIKLKNKI). The region spanning 814-834 (AEACIKMQKTIRMWLCKRRHK) is the IQ domain. Residues 835-916 (PRIDGLVKVG…EDLLSALQKK (82 aa)) are three-helix bundle. Residues 864-984 (KPEVNRQIKN…EDDEKRIQAE (121 aa)) are a coiled coil. The segment at 917 to 984 (KQQEEEAERL…EDDEKRIQAE (68 aa)) is SAH. The segment at 933-955 (MEKERKRREEDEERRRKEEEERR) is disordered. Ser1025 is subject to Phosphoserine. The tract at residues 1034–1253 (LRRGPAVQAT…ESRQARPTYA (220 aa)) is interaction with TAX1BP1 and CALCOCO2/NDP52. Positions 1084–1086 (RRL) are interaction with OPTN. Residue Ser1123 is modified to Phosphoserine. The segment at 1125-1253 (QQNPAAQLPA…ESRQARPTYA (129 aa)) is interaction with TOM1.

Belongs to the TRAFAC class myosin-kinesin ATPase superfamily. Myosin family. As to quaternary structure, homodimer; dimerization seems to implicate the unfolding of the three-helix bundle region creating an additional calmodulin binding site, and cargo binding. Able to function as a monomer under specific conditions in vitro. Forms a complex with CFTR and DAB2 in the apical membrane of epithelial cells. Component of the DISP/DOCK7-induced septin displacement complex, at least composed of DOCK7, LRCH3 and MYO6. Binding to calmodulin through a unique insert, not found in other myosins, located in the neck region between the motor domain and the IQ domain appears to contribute to the directionality reversal. This interaction occurs only if the C-terminal lobe of calmodulin is occupied by calcium. Interaction with F-actin/ACTN1 occurs only at the apical brush border domain of the proximal tubule cells. Interacts with DAB2. In vitro, the C-terminal globular tail binds a C-terminal region of DAB2. Interacts with CFTR. Interacts with CABP5. Interacts (via residues 1128-1256) with TOM1 (via residues 392-463). Interacts (via residues 1060-1285) with OPTN. Interacts (via residues 1060-1285) with TAX1BP1 and CALCOCO2/NDP52. Interacts with TOM1L2. Interacts with CLIC5; may work together in a complex which also includes RDX and MYO6 to stabilize linkages between the plasma membrane and subjacent actin cytoskeleton at the base of stereocilia. Post-translationally, phosphorylation in the motor domain, induced by EGF, results in translocation of MYO6 from the cell surface to membrane ruffles and affects F-actin dynamics. Phosphorylated in vitro by p21-activated kinase (PAK). As to expression, within the cochlea, expressed specifically within the sensory hair cells (at protein level). Expressed in the inner and outer plexiform layer of the retina (at protein level). Widely expressed. Expressed in the brain, kidney, liver, and testis.

It is found in the golgi apparatus. The protein resides in the trans-Golgi network membrane. Its subcellular location is the nucleus. The protein localises to the cytoplasm. It localises to the perinuclear region. It is found in the membrane. The protein resides in the clathrin-coated pit. Its subcellular location is the cytoplasmic vesicle. The protein localises to the clathrin-coated vesicle. It localises to the cell projection. It is found in the filopodium. The protein resides in the ruffle membrane. Its subcellular location is the microvillus. The protein localises to the cytosol. Myosins are actin-based motor molecules with ATPase activity. Unconventional myosins serve in intracellular movements. Myosin 6 is a reverse-direction motor protein that moves towards the minus-end of actin filaments. Has slow rate of actin-activated ADP release due to weak ATP binding. Functions in a variety of intracellular processes such as vesicular membrane trafficking and cell migration. Required for the structural integrity of the Golgi apparatus via the p53-dependent pro-survival pathway. Appears to be involved in a very early step of clathrin-mediated endocytosis in polarized epithelial cells. Together with TOM1, mediates delivery of endocytic cargo to autophagosomes thereby promoting autophagosome maturation and driving fusion with lysosomes. Links TOM1 with autophagy receptors, such as TAX1BP1; CALCOCO2/NDP52 and OPTN. May act as a regulator of F-actin dynamics. As part of the DISP complex, may regulate the association of septins with actin and thereby regulate the actin cytoskeleton. May play a role in transporting DAB2 from the plasma membrane to specific cellular targets. May play a role in the extension and network organization of neurites. Required for structural integrity of inner ear hair cells. Required for the correct localization of CLIC5 and RDX at the stereocilium base. Modulates RNA polymerase II-dependent transcription. In Mus musculus (Mouse), this protein is Unconventional myosin-VI (Myo6).